The sequence spans 126 residues: Fluoride-specific ion channel FluC (126 aa).

4 helical membrane passes run 4–24 (SILAVGIGGALGSLFRWFLGI), 35–55 (LGTFAANVIAGYVIGVAVAGF), 68–88 (FVITGLMGGLSTFSTFSAEVV), and 103–123 (IVIHVGASLVMTILGIATVSL). Positions 75 and 78 each coordinate Na(+).

The protein belongs to the fluoride channel Fluc/FEX (TC 1.A.43) family.

It is found in the cell inner membrane. The catalysed reaction is fluoride(in) = fluoride(out). Na(+) is not transported, but it plays an essential structural role and its presence is essential for fluoride channel function. Fluoride-specific ion channel. Important for reducing fluoride concentration in the cell, thus reducing its toxicity. This is Fluoride-specific ion channel FluC from Paraburkholderia xenovorans (strain LB400).